Consider the following 418-residue polypeptide: Glutamyl-tRNA reductase (418 aa).

Residues 49 to 52 (TCNR), Ser-108, 113 to 115 (EPQ), and Gln-119 contribute to the substrate site. Residue Cys-50 is the Nucleophile of the active site. NADP(+) is bound at residue 188 to 193 (GAGETI).

The protein belongs to the glutamyl-tRNA reductase family. Homodimer.

It catalyses the reaction (S)-4-amino-5-oxopentanoate + tRNA(Glu) + NADP(+) = L-glutamyl-tRNA(Glu) + NADPH + H(+). It functions in the pathway porphyrin-containing compound metabolism; protoporphyrin-IX biosynthesis; 5-aminolevulinate from L-glutamyl-tRNA(Glu): step 1/2. Its function is as follows. Catalyzes the NADPH-dependent reduction of glutamyl-tRNA(Glu) to glutamate 1-semialdehyde (GSA). The sequence is that of Glutamyl-tRNA reductase from Aliivibrio fischeri (strain ATCC 700601 / ES114) (Vibrio fischeri).